The following is a 426-amino-acid chain: Target of rapamycin complex 2 subunit AVO2 (426 aa).

ANK repeat units follow at residues Glu-4 to Thr-33, Asn-39 to Glu-68, Lys-74 to His-104, Asn-108 to Val-137, and Asn-141 to Asp-171. Positions Ser-259–Arg-302 are disordered. Positions Thr-260–Val-278 are enriched in polar residues. Positions Thr-285–Arg-302 are enriched in low complexity. Ser-315 and Ser-350 each carry phosphoserine. Residues Ser-350–Gln-359 show a composition bias toward polar residues. A disordered region spans residues Ser-350 to Lys-392. The segment covering Asp-366 to Ala-375 has biased composition (gly residues). Basic and acidic residues predominate over residues Leu-381–Lys-392.

The target of rapamycin complex 2 (TORC2) is composed of at least AVO1, AVO2, BIT61, LST8, TOR2 and TSC11. TORC2 forms a homodimer. Contrary to TORC1, TORC2 does not bind to and is not sensitive to FKBP-rapamycin. AVO2 is peripherally associated to AVO1 and TSC11.

The protein resides in the cell membrane. It localises to the vacuole membrane. Component of TORC2, which regulates cell cycle-dependent polarization of the actin-cytoskeleton and cell wall integrity. TORC2 controls polarity of the actin cytoskeleton, which is required for orienting the secretory pathway toward discrete growth sites, via the RHO1/PKC1/MAPK cell integrity pathway. The protein is Target of rapamycin complex 2 subunit AVO2 (AVO2) of Saccharomyces cerevisiae (strain ATCC 204508 / S288c) (Baker's yeast).